A 506-amino-acid chain; its full sequence is UDP-glycosyltransferase eriJ (506 aa).

Belongs to the UDP-glycosyltransferase family.

The enzyme catalyses 11-O-acetylcyathatriol + UDP-alpha-D-xylose = erinacine Q + UDP + H(+). The catalysed reaction is 11-O-acetylcyathatriol + UDP-alpha-D-glucose = erinacine Q2 + UDP + H(+). Its pathway is secondary metabolite biosynthesis. In terms of biological role, UDP-glycosyltransferase; part of the gene cluster that mediates the biosynthesis of erinacines, cyathane-xylosides that show unique biological activities, including leishmanicidal activity, stimulating activity for nerve growth-factor synthesis, and agonistic activity toward the kappa opioid receptor. Within the pathway, eriJ tranfers xylose from UDP-xylose onto C-14 of 11-O-acetyl-cyathatriol to form eracine Q, and, at a lower rate, glucose from UDP-D-glucose to produce eracine Q2. The first step of the erinacines biosynthesis pathway is catalyzed by the geranylgeranyl diphosphate (GGPP) synthase eriE via conversion of farnesyl pyrophosphate and isopentyl pyrophosphate into geranylgeranyl pyrophosphate (GGPP). GGPP is then substrate of the diterpene cyclase eriG for the production of cyatha-3,12-diene. The cytochrome P450 monooxygenase eriI then hydroxylates cyatha-3,12-diene at C-14 of the seven-membered ring to produce erinacol, which is further hydroxylated at C-15 by the cytochrome P450 monooxygenase eriC to yield cyathadiol. The cytochrome P450 monooxygenase eriA then catalyzes C-11 hydroxylation in the presence of the short chain dehydrogenase/reductase (SDR) eriH, which leads to the production of cyathatriol. The acetyltransferase eriL converts cyathatriol into 11-O-acetyl-cyathatriol. The SDR eriH catalyzes further oxidation of 11-O-acetyl-cyathatriol into 1-O-acetylcyathin A3. Finally, the glycosyl transferase eriJ tranfers xylose from UDP-xylose onto C-14 of 11-O-acetyl-cyathatriol to form eracine Q. EriJ is also able to convert 11-O-acetyl-cyathatriol to eracine Q2 by using UDP-D-glucose as cosubstrate, but at a lower rate. The chain is UDP-glycosyltransferase eriJ from Hericium erinaceus (Lion's mane mushroom).